Reading from the N-terminus, the 91-residue chain is Large ribosomal subunit protein eL34 (91 aa).

The tract at residues 48–71 (RGRPVEMRKLPKTKKRPERPYPHL) is disordered.

The protein belongs to the eukaryotic ribosomal protein eL34 family.

The protein is Large ribosomal subunit protein eL34 (rpl34e) of Pyrococcus abyssi (strain GE5 / Orsay).